The sequence spans 545 residues: Chaperonin GroEL 1 (545 aa).

ATP is bound by residues 30 to 33 (TLGP), Lys-51, 87 to 91 (DGTTT), Gly-415, and Asp-495.

Belongs to the chaperonin (HSP60) family. In terms of assembly, forms a cylinder of 14 subunits composed of two heptameric rings stacked back-to-back. Interacts with the co-chaperonin GroES.

It localises to the cytoplasm. It carries out the reaction ATP + H2O + a folded polypeptide = ADP + phosphate + an unfolded polypeptide.. Functionally, together with its co-chaperonin GroES, plays an essential role in assisting protein folding. The GroEL-GroES system forms a nano-cage that allows encapsulation of the non-native substrate proteins and provides a physical environment optimized to promote and accelerate protein folding. In Rhizobium etli (strain ATCC 51251 / DSM 11541 / JCM 21823 / NBRC 15573 / CFN 42), this protein is Chaperonin GroEL 1.